The primary structure comprises 167 residues: Peptide deformylase (167 aa).

Fe cation-binding residues include Cys91 and His133. Glu134 is an active-site residue. His137 contacts Fe cation.

The protein belongs to the polypeptide deformylase family. Fe(2+) is required as a cofactor.

The catalysed reaction is N-terminal N-formyl-L-methionyl-[peptide] + H2O = N-terminal L-methionyl-[peptide] + formate. Functionally, removes the formyl group from the N-terminal Met of newly synthesized proteins. Requires at least a dipeptide for an efficient rate of reaction. N-terminal L-methionine is a prerequisite for activity but the enzyme has broad specificity at other positions. The sequence is that of Peptide deformylase from Tolumonas auensis (strain DSM 9187 / NBRC 110442 / TA 4).